An 870-amino-acid polypeptide reads, in one-letter code: MOG interacting and ectopic P-granules protein 1 (870 aa).

The disordered stretch occupies residues 1 to 244 (MVTADETVLA…VPEEDNNEQA (244 aa)). Polar residues predominate over residues 9-20 (LATTTNTTSMSV). Residues 41 to 51 (EQLKAEQREVM) are compositionally biased toward basic and acidic residues. Composition is skewed to acidic residues over residues 77 to 99 (EVIEIDDTEESTDPSPDGSDENG), 129 to 142 (IEQDDDGDVMEITE), and 203 to 214 (IELDDDDDDEIQ). 2 consecutive C2H2-type zinc fingers follow at residues 421–444 (HRCDVCGFQTESKLVMSTHKENLH) and 450–473 (FQCTMCKETDTSEQRMKDHYFETH). The CCHC-type zinc-finger motif lies at 486-508 (YPCAICEEDFNFKGVREQHYKQC). 2 stretches are compositionally biased toward polar residues: residues 673-688 (LQAAVNSMRSQNSQKT) and 695-708 (KLVTTPSHATVGSS). Residues 673 to 708 (LQAAVNSMRSQNSQKTPTHRSSKLVTTPSHATVGSS) are disordered. 4 C2H2-type zinc fingers span residues 713–736 (FVCEICDASVQEKEKYLQHLQTTH), 753–776 (LACSRCRDRFWTYEGLERHLVMSH), 794–815 (GRCKTCGKNYAFNMLQHLVADH), and 826–849 (YSCDVCAFKCSSYQTLEAHLTSNH). The disordered stretch occupies residues 847 to 870 (SNHPKGDKKTSTPAKKDDCITLDD). Residues 850-870 (PKGDKKTSTPAKKDDCITLDD) show a composition bias toward basic and acidic residues.

Interacts with hda-1, let-418, lin-1, mog-1, mog-4, mog-5, mog-6, pie-1 and unc-98. In terms of processing, sumoylated. In terms of tissue distribution, expressed in somatic cells of embryos, the head, hypodermis and tail of larvae and the germline of adults, including oocytes but not mature sperm and spermatocytes.

It localises to the nucleus. Its function is as follows. Has a broad role in development, specifically in the genetic pathway SynMuvB that negatively regulates specification of the vulval cell fate. Required for fem-3 3'-UTR-mediated repression in the regulation of the sperm/oocyte switch. Acts by regulating the translation of fem-3 mRNA, by binding to its 3'-UTR. This chain is MOG interacting and ectopic P-granules protein 1, found in Caenorhabditis elegans.